The primary structure comprises 581 residues: Alpha-amylase 2 (581 aa).

A signal peptide spans 1-24; it reads MNYRRNICLRIGWMLLFAFIPAYA. A disulfide bond links Cys56 and Cys64. Trp109 serves as a coordination point for substrate. Residue Asn147 participates in Ca(2+) binding. The cysteines at positions 176 and 191 are disulfide-linked. A Ca(2+)-binding site is contributed by Asp202. Arg231 is a substrate binding site. Ca(2+)-binding residues include Asp233, His237, and Glu257. The active-site Nucleophile is Asp233. 236–237 contacts substrate; that stretch reads KH. Residue Glu257 is the Proton donor of the active site. Gly261 contacts substrate. A disulfide bridge links Cys267 with Cys311. Asn291 carries N-linked (GlcNAc...) asparagine glycosylation. Residue Asp325 participates in substrate binding. A glycan (N-linked (GlcNAc...) asparagine) is linked at Asn332. Arg372 is a binding site for substrate. The GPI-anchor amidated serine moiety is linked to residue Ser551. Residues 552 to 581 constitute a propeptide, removed in mature form; it reads EAKTIRSFTKLKLFILLIAVPFALPMIILI.

It belongs to the glycosyl hydrolase 13 family. It depends on Ca(2+) as a cofactor.

It localises to the cell membrane. It carries out the reaction Endohydrolysis of (1-&gt;4)-alpha-D-glucosidic linkages in polysaccharides containing three or more (1-&gt;4)-alpha-linked D-glucose units.. The chain is Alpha-amylase 2 (aah2) from Schizosaccharomyces pombe (strain 972 / ATCC 24843) (Fission yeast).